Reading from the N-terminus, the 518-residue chain is Glutamate--cysteine ligase (518 aa).

It belongs to the glutamate--cysteine ligase type 1 family. Type 1 subfamily.

It catalyses the reaction L-cysteine + L-glutamate + ATP = gamma-L-glutamyl-L-cysteine + ADP + phosphate + H(+). Its pathway is sulfur metabolism; glutathione biosynthesis; glutathione from L-cysteine and L-glutamate: step 1/2. The protein is Glutamate--cysteine ligase of Salmonella typhi.